We begin with the raw amino-acid sequence, 834 residues long: Periplasmic nitrate reductase (834 aa).

Positions 1–29 form a signal peptide, tat-type signal; the sequence is MSLTRRQFAKANAAAIAATVAGMPIASTA. Residues 41–97 enclose the 4Fe-4S Mo/W bis-MGD-type domain; it reads LKWDKAPCRFCGTGCGVMVATRENRVVATHGDVKADVNRGINCVKGYFLSKIMYGTD. 4 residues coordinate [4Fe-4S] cluster: C48, C51, C55, and C83. Mo-bis(molybdopterin guanine dinucleotide)-binding positions include K85, Q152, N177, C181, 214-221, 245-249, 264-266, M375, Q379, N485, 511-512, K534, D561, and 721-730; these read WGSNMAEM, STFEH, QTD, SD, and TGRVLEHWHT. F797 serves as a coordination point for substrate. Residues N805 and K822 each contribute to the Mo-bis(molybdopterin guanine dinucleotide) site.

Belongs to the prokaryotic molybdopterin-containing oxidoreductase family. NasA/NapA/NarB subfamily. As to quaternary structure, component of the periplasmic nitrate reductase NapAB complex composed of NapA and NapB. It depends on [4Fe-4S] cluster as a cofactor. Requires Mo-bis(molybdopterin guanine dinucleotide) as cofactor. In terms of processing, predicted to be exported by the Tat system. The position of the signal peptide cleavage has not been experimentally proven.

The protein localises to the periplasm. It catalyses the reaction 2 Fe(II)-[cytochrome] + nitrate + 2 H(+) = 2 Fe(III)-[cytochrome] + nitrite + H2O. Catalytic subunit of the periplasmic nitrate reductase complex NapAB. Receives electrons from NapB and catalyzes the reduction of nitrate to nitrite. This Stutzerimonas stutzeri (Pseudomonas stutzeri) protein is Periplasmic nitrate reductase.